We begin with the raw amino-acid sequence, 1705 residues long: ALK tyrosine kinase receptor (1705 aa).

An N-terminal signal peptide occupies residues 1-21; the sequence is MIARILYFFLWSAAFLPELQC. The Extracellular portion of the chain corresponds to 22–1035; the sequence is ASQRTADALT…SLSHLALGLS (1014 aa). Residues asparagine 40 and asparagine 48 are each glycosylated (N-linked (GlcNAc...) asparagine). Positions 54 to 76 are heparin-binding region; that stretch reads RIKRKTLSVDFAVPSLLRYYLAL. Residues asparagine 124, asparagine 259, asparagine 334, asparagine 434, asparagine 442, asparagine 458, asparagine 484, asparagine 578, asparagine 590, and asparagine 635 are each glycosylated (N-linked (GlcNAc...) asparagine). The region spanning 486 to 644 is the MAM domain; sequence SYCSFGREDC…NFTLSMECFL (159 aa). A disulfide bridge links cysteine 694 with cysteine 707. Asparagine 717 carries an N-linked (GlcNAc...) asparagine glycan. A disulfide bond links cysteine 788 and cysteine 799. 2 N-linked (GlcNAc...) asparagine glycosylation sites follow: asparagine 808 and asparagine 881. A disordered region spans residues 842 to 892; that stretch reads GGGRGYSSQSETPEEVMDRDPSIPGRNGKSGTAGGGGGWNDSAPVPQGGRP. Cysteine 903 and cysteine 921 are oxidised to a cystine. N-linked (GlcNAc...) asparagine glycosylation is present at asparagine 979. Intrachain disulfides connect cysteine 980-cysteine 988 and cysteine 983-cysteine 997. Residues 980-1016 form an EGF-like region; the sequence is CSHCESGDCHETSEGMVCYCDEELTLAPDGVSCINST. An N-linked (GlcNAc...) asparagine glycan is attached at asparagine 1014. Residues 1036 to 1056 form a helical membrane-spanning segment; the sequence is VGTSALIAALLLAVSGVMIMY. Residues 1057–1705 lie on the Cytoplasmic side of the membrane; it reads RRKHTELQSI…KMEGHNATVL (649 aa). One can recognise a Protein kinase domain in the interval 1113 to 1389; it reads ISLTRGLGHG…IDYCLQDPDV (277 aa). ATP-binding positions include 1119 to 1127 and lysine 1147; that span reads LGHGAFGEV. The active-site Proton acceptor is aspartate 1246. Disordered regions lie at residues 1395-1499, 1505-1524, 1532-1557, 1588-1613, and 1646-1681; these read PVEY…GHVN, AHSS…WNPT, QQQK…GQEQ, QQQQ…PAPT, and GLPM…DSRP. Positions 1484–1493 are enriched in polar residues; sequence KPSSTTSNAQ. Composition is skewed to low complexity over residues 1532–1544 and 1588–1602; these read QQQK…AQRQ and QQQQ…LCRP. Residues 1603–1613 are compositionally biased toward pro residues; that stretch reads LLPPPPPPAPT.

The protein belongs to the protein kinase superfamily. Tyr protein kinase family. Insulin receptor subfamily. In terms of assembly, homodimer; homodimerizes upon binding to alkal ligands (alkal1, alkal2a or alkal2b). In terms of tissue distribution, highly expressed in the developing central nervous system: highly expressed in brain, with much lower expression in heart, caudal fin and testis.

Its subcellular location is the cell membrane. It carries out the reaction L-tyrosyl-[protein] + ATP = O-phospho-L-tyrosyl-[protein] + ADP + H(+). Its activity is regulated as follows. Inhibited by ALK inhibitor TAE684. Receptor tyrosine kinase required for neurogenesis in the developing central nervous system. Following activation by alkal ligands (alkal1, alkal2a or alkal2b) at the cell surface, transduces an extracellular signal into an intracellular response. Ligand-binding to the extracellular domain induces tyrosine kinase activation, resulting in the activation of the mitogen-activated protein kinase (MAPK) pathway. Phosphorylates almost exclusively at the first tyrosine of the Y-x-x-x-Y-Y motif. This chain is ALK tyrosine kinase receptor, found in Danio rerio (Zebrafish).